A 1117-amino-acid chain; its full sequence is Protein ECM21 (1117 aa).

Disordered regions lie at residues 1–48 and 63–155; these read MPFI…RRSS and VHSP…YSQI. The segment covering 11 to 34 has biased composition (polar residues); it reads KNSSHSLSETDLNQSKGQPFQPSP. Position 18 is a phosphoserine (serine 18). Low complexity predominate over residues 70-81; the sequence is NNTTKGGNNNGN. Serine 115 is subject to Phosphoserine. The segment covering 117 to 130 has biased composition (low complexity); that stretch reads SDSATTTPRSSTSD. Serine 140 carries the phosphoserine modification. Lysine 191 participates in a covalent cross-link: Glycyl lysine isopeptide (Lys-Gly) (interchain with G-Cter in ubiquitin). Disordered stretches follow at residues 275-312 and 486-523; these read ATTA…ELNT and YRQD…AQAH. Serine 286 bears the Phosphoserine mark. Low complexity predominate over residues 501–519; it reads SSSSLSSTTSSLKLTETES. Serine 527 and serine 550 each carry phosphoserine. Residues lysine 577, lysine 651, and lysine 712 each participate in a glycyl lysine isopeptide (Lys-Gly) (interchain with G-Cter in ubiquitin) cross-link. At serine 775 the chain carries Phosphoserine. Residues lysine 794, lysine 807, and lysine 1024 each participate in a glycyl lysine isopeptide (Lys-Gly) (interchain with G-Cter in ubiquitin) cross-link. Disordered regions lie at residues 1016–1065 and 1079–1117; these read RSRF…KDKQ and KDDE…SDEE. Residues 1027 to 1059 show a composition bias toward polar residues; that stretch reads STPSPVNRSHNSSPTNGLSQANGTVRIPNATTE. A Phosphoserine modification is found at serine 1035. Over residues 1089-1098 the composition is skewed to low complexity; the sequence is SSSSADSLLS.

The protein belongs to the CSR2 family.

The protein localises to the cytoplasm. May be involved in cell wall organization and biogenesis. In Saccharomyces cerevisiae (strain ATCC 204508 / S288c) (Baker's yeast), this protein is Protein ECM21 (ECM21).